The primary structure comprises 134 residues: Putative esterase PA0474 (134 aa).

This sequence belongs to the thioesterase PaaI family.

The chain is Putative esterase PA0474 from Pseudomonas aeruginosa (strain ATCC 15692 / DSM 22644 / CIP 104116 / JCM 14847 / LMG 12228 / 1C / PRS 101 / PAO1).